A 438-amino-acid chain; its full sequence is Glutamyl-tRNA(Gln) amidotransferase subunit D (438 aa).

The region spanning 92-422 is the Asparaginase/glutaminase domain; sequence PDVTIIGTGG…EEVRRMMLTN (331 aa). Residues threonine 102, threonine 178, aspartate 179, and lysine 256 contribute to the active site.

Belongs to the asparaginase 1 family. GatD subfamily. Heterodimer of GatD and GatE.

It carries out the reaction L-glutamyl-tRNA(Gln) + L-glutamine + ATP + H2O = L-glutaminyl-tRNA(Gln) + L-glutamate + ADP + phosphate + H(+). Allows the formation of correctly charged Gln-tRNA(Gln) through the transamidation of misacylated Glu-tRNA(Gln) in organisms which lack glutaminyl-tRNA synthetase. The reaction takes place in the presence of glutamine and ATP through an activated gamma-phospho-Glu-tRNA(Gln). The GatDE system is specific for glutamate and does not act on aspartate. The polypeptide is Glutamyl-tRNA(Gln) amidotransferase subunit D (Pyrococcus horikoshii (strain ATCC 700860 / DSM 12428 / JCM 9974 / NBRC 100139 / OT-3)).